The chain runs to 262 residues: Type III pantothenate kinase (262 aa).

Asp6 to Val13 provides a ligand contact to ATP. Residues Tyr100 and Gly107–Arg110 each bind substrate. The active-site Proton acceptor is Asp109. Asp129 contacts K(+). An ATP-binding site is contributed by Thr132. Thr184 serves as a coordination point for substrate.

The protein belongs to the type III pantothenate kinase family. As to quaternary structure, homodimer. NH4(+) is required as a cofactor. The cofactor is K(+).

The protein localises to the cytoplasm. It catalyses the reaction (R)-pantothenate + ATP = (R)-4'-phosphopantothenate + ADP + H(+). Its pathway is cofactor biosynthesis; coenzyme A biosynthesis; CoA from (R)-pantothenate: step 1/5. In terms of biological role, catalyzes the phosphorylation of pantothenate (Pan), the first step in CoA biosynthesis. This chain is Type III pantothenate kinase, found in Bacillus cytotoxicus (strain DSM 22905 / CIP 110041 / 391-98 / NVH 391-98).